The following is a 160-amino-acid chain: 3-hydroxyacyl-[acyl-carrier-protein] dehydratase FabZ (160 aa).

Residue H60 is part of the active site.

Belongs to the thioester dehydratase family. FabZ subfamily.

Its subcellular location is the cytoplasm. The enzyme catalyses a (3R)-hydroxyacyl-[ACP] = a (2E)-enoyl-[ACP] + H2O. Functionally, involved in unsaturated fatty acids biosynthesis. Catalyzes the dehydration of short chain beta-hydroxyacyl-ACPs and long chain saturated and unsaturated beta-hydroxyacyl-ACPs. The protein is 3-hydroxyacyl-[acyl-carrier-protein] dehydratase FabZ of Rhodospirillum rubrum (strain ATCC 11170 / ATH 1.1.1 / DSM 467 / LMG 4362 / NCIMB 8255 / S1).